Here is a 204-residue protein sequence, read N- to C-terminus: Protein GrpE (204 aa).

Residues 1–55 are disordered; the sequence is MSSKNNPESETKAKNKWEKVMEAEEEQEEGRGDGSQEMEPHREGLEFPSREKLEG. Basic and acidic residues-rich tracts occupy residues 7–22 and 29–55; these read PESE…KVME and EGRG…KLEG.

Belongs to the GrpE family. In terms of assembly, homodimer.

The protein resides in the cytoplasm. Participates actively in the response to hyperosmotic and heat shock by preventing the aggregation of stress-denatured proteins, in association with DnaK and GrpE. It is the nucleotide exchange factor for DnaK and may function as a thermosensor. Unfolded proteins bind initially to DnaJ; upon interaction with the DnaJ-bound protein, DnaK hydrolyzes its bound ATP, resulting in the formation of a stable complex. GrpE releases ADP from DnaK; ATP binding to DnaK triggers the release of the substrate protein, thus completing the reaction cycle. Several rounds of ATP-dependent interactions between DnaJ, DnaK and GrpE are required for fully efficient folding. This Coxiella burnetii (strain RSA 331 / Henzerling II) protein is Protein GrpE.